A 356-amino-acid polypeptide reads, in one-letter code: Galectin-9C (356 aa).

The 132-residue stretch at 17-148 folds into the Galectin 1 domain; the sequence is FSGTIQGGLQ…SVQLSYISFQ (132 aa). 82–88 contacts a beta-D-galactoside; that stretch reads WGPEERK. The interval 170–190 is disordered; the sequence is FPPRPRGRRQKPPSVRPANPA. In terms of domain architecture, Galectin 2 spans 228–356; the sequence is FITTIPGGLY…GDIQLTHVQT (129 aa). An a beta-D-galactoside-binding site is contributed by 288–294; that stretch reads WGSEERS.

In terms of biological role, binds galactosides. The polypeptide is Galectin-9C (LGALS9C) (Homo sapiens (Human)).